We begin with the raw amino-acid sequence, 232 residues long: Ubiquinone biosynthesis O-methyltransferase (232 aa).

S-adenosyl-L-methionine contacts are provided by Arg36, Gly55, Asp76, and Leu120.

Belongs to the methyltransferase superfamily. UbiG/COQ3 family.

The enzyme catalyses a 3-demethylubiquinol + S-adenosyl-L-methionine = a ubiquinol + S-adenosyl-L-homocysteine + H(+). It carries out the reaction a 3-(all-trans-polyprenyl)benzene-1,2-diol + S-adenosyl-L-methionine = a 2-methoxy-6-(all-trans-polyprenyl)phenol + S-adenosyl-L-homocysteine + H(+). It participates in cofactor biosynthesis; ubiquinone biosynthesis. O-methyltransferase that catalyzes the 2 O-methylation steps in the ubiquinone biosynthetic pathway. The protein is Ubiquinone biosynthesis O-methyltransferase of Dechloromonas aromatica (strain RCB).